Reading from the N-terminus, the 233-residue chain is 5'-methylthioadenosine/S-adenosylhomocysteine nucleosidase (233 aa).

Glu12 serves as the catalytic Proton acceptor. Substrate contacts are provided by residues Gly78, Ile153, and 174 to 175 (ME). Asp198 acts as the Proton donor in catalysis.

Belongs to the PNP/UDP phosphorylase family. MtnN subfamily.

The enzyme catalyses S-adenosyl-L-homocysteine + H2O = S-(5-deoxy-D-ribos-5-yl)-L-homocysteine + adenine. It carries out the reaction S-methyl-5'-thioadenosine + H2O = 5-(methylsulfanyl)-D-ribose + adenine. The catalysed reaction is 5'-deoxyadenosine + H2O = 5-deoxy-D-ribose + adenine. It functions in the pathway amino-acid biosynthesis; L-methionine biosynthesis via salvage pathway; S-methyl-5-thio-alpha-D-ribose 1-phosphate from S-methyl-5'-thioadenosine (hydrolase route): step 1/2. Catalyzes the irreversible cleavage of the glycosidic bond in both 5'-methylthioadenosine (MTA) and S-adenosylhomocysteine (SAH/AdoHcy) to adenine and the corresponding thioribose, 5'-methylthioribose and S-ribosylhomocysteine, respectively. Also cleaves 5'-deoxyadenosine, a toxic by-product of radical S-adenosylmethionine (SAM) enzymes, into 5-deoxyribose and adenine. The sequence is that of 5'-methylthioadenosine/S-adenosylhomocysteine nucleosidase from Exiguobacterium sp. (strain ATCC BAA-1283 / AT1b).